Reading from the N-terminus, the 188-residue chain is Protein Cripto (188 aa).

Residues Met1 to Gly30 form the signal peptide. The EGF-like domain maps to Leu78–Glu107. A glycan (N-linked (GlcNAc...) asparagine) is linked at Asn79. 6 disulfides stabilise this stretch: Cys82/Cys89, Cys83/Cys95, Cys97/Cys106, Cys115/Cys133, Cys128/Cys149, and Cys131/Cys140. Asp150 carries the GPI-anchor amidated aspartate lipid modification. Positions Gly151 to Tyr188 are cleaved as a propeptide — removed in mature form.

Belongs to the EGF-CFC (Cripto-1/FRL1/Cryptic) family. As to quaternary structure, interacts with the activin type-1 receptor ACVR1B. The GPI-anchor is attached to the protein in the endoplasmic reticulum and serves to target the protein to the cell surface. There, it is processed by GPI processing phospholipase A2 (TMEM8A), removing an acyl-chain at the sn-2 position of GPI and releasing CRIPTO as a lysophosphatidylinositol-bearing form, which is further cleaved by phospholipase D (GPLD1) into a soluble form. As to expression, preferentially expressed in gastric and colorectal carcinomas than in their normal counterparts. Expressed in breast and lung.

The protein localises to the cell membrane. The protein resides in the secreted. Functionally, GPI-anchored cell membrane protein involved in Nodal signaling. Cell-associated CRIPTO acts as a Nodal coreceptor in cis. Shedding of CRIPTO by TMEM8A modulates Nodal signaling by allowing soluble CRIPTO to act as a Nodal coreceptor on other cells. Could play a role in the determination of the epiblastic cells that subsequently give rise to the mesoderm. In Homo sapiens (Human), this protein is Protein Cripto.